Reading from the N-terminus, the 237-residue chain is Undecaprenyl-diphosphatase (237 aa).

7 consecutive transmembrane segments (helical) span residues 38–58, 65–85, 92–112, 126–146, 166–186, 191–211, and 217–237; these read QTAVLHLGTLVSVVLFAFDGI, WRIILNLIVSTIPAGVFGVLF, LFSSPRFLPLFFSVTALILMF, MSFLDALLVGIAQLFALFPGI, ALQYSFLMSIPVVLGAGILGL, VTILAPIFAFLSGLFALYVLS, and GKIWQFSYYCLFVAILSYLVG.

This sequence belongs to the UppP family.

The protein localises to the cell inner membrane. The enzyme catalyses di-trans,octa-cis-undecaprenyl diphosphate + H2O = di-trans,octa-cis-undecaprenyl phosphate + phosphate + H(+). Functionally, catalyzes the dephosphorylation of undecaprenyl diphosphate (UPP). Confers resistance to bacitracin. This Thermotoga sp. (strain RQ2) protein is Undecaprenyl-diphosphatase.